A 308-amino-acid polypeptide reads, in one-letter code: Aspartate carbamoyltransferase catalytic subunit (308 aa).

Residues R59 and T60 each contribute to the carbamoyl phosphate site. Position 87 (K87) interacts with L-aspartate. Residues R109, H139, and Q142 each contribute to the carbamoyl phosphate site. Residues R172 and R224 each contribute to the L-aspartate site. Carbamoyl phosphate-binding residues include A265 and P266.

The protein belongs to the aspartate/ornithine carbamoyltransferase superfamily. ATCase family. Heterododecamer (2C3:3R2) of six catalytic PyrB chains organized as two trimers (C3), and six regulatory PyrI chains organized as three dimers (R2).

The enzyme catalyses carbamoyl phosphate + L-aspartate = N-carbamoyl-L-aspartate + phosphate + H(+). It participates in pyrimidine metabolism; UMP biosynthesis via de novo pathway; (S)-dihydroorotate from bicarbonate: step 2/3. Catalyzes the condensation of carbamoyl phosphate and aspartate to form carbamoyl aspartate and inorganic phosphate, the committed step in the de novo pyrimidine nucleotide biosynthesis pathway. The protein is Aspartate carbamoyltransferase catalytic subunit of Streptococcus mutans serotype c (strain ATCC 700610 / UA159).